Here is an 89-residue protein sequence, read N- to C-terminus: uncharacterized protein (89 aa).

Helical transmembrane passes span 5-27 (TLTE…GFTA), 32-51 (LYIG…KRLL), and 63-85 (LFFS…ALVA).

The protein localises to the cell membrane. This is an uncharacterized protein from Bacillus subtilis (strain 168).